A 220-amino-acid polypeptide reads, in one-letter code: Octanoyltransferase (220 aa).

The BPL/LPL catalytic domain occupies 31–206; sequence DDTPDEVWLV…ELVTLLDYEQ (176 aa). Residues 70–77, 137–139, and 150–152 contribute to the substrate site; these read RGGQVTYH, SLG, and GLA. Cys-168 (acyl-thioester intermediate) is an active-site residue.

Belongs to the LipB family.

It is found in the cytoplasm. It carries out the reaction octanoyl-[ACP] + L-lysyl-[protein] = N(6)-octanoyl-L-lysyl-[protein] + holo-[ACP] + H(+). It functions in the pathway protein modification; protein lipoylation via endogenous pathway; protein N(6)-(lipoyl)lysine from octanoyl-[acyl-carrier-protein]: step 1/2. Its function is as follows. Catalyzes the transfer of endogenously produced octanoic acid from octanoyl-acyl-carrier-protein onto the lipoyl domains of lipoate-dependent enzymes. Lipoyl-ACP can also act as a substrate although octanoyl-ACP is likely to be the physiological substrate. This Vibrio campbellii (strain ATCC BAA-1116) protein is Octanoyltransferase.